The chain runs to 266 residues: Gap junction beta-4 protein (266 aa).

Residues Asn2 to Val13 lie within the membrane without spanning it. Residues Asn14–Leu20 lie on the Cytoplasmic side of the membrane. Residues Gly21–Ala40 form a helical membrane-spanning segment. Over Glu41–His73 the chain is Extracellular. 3 disulfide bridges follow: Cys53–Cys175, Cys60–Cys169, and Cys64–Cys164. Residues Val74–His94 traverse the membrane as a helical segment. The Cytoplasmic segment spans residues Val95 to Thr130. Residues Tyr131–Cys151 form a helical membrane-spanning segment. At Ile152–Lys184 the chain is on the extracellular side. Residues Val185–Val205 form a helical membrane-spanning segment. Residues Val206–Pro266 are Cytoplasmic-facing.

It belongs to the connexin family. Beta-type (group I) subfamily. As to quaternary structure, a hemichannel or connexon is composed of a hexamer of connexins. A functional gap junction is formed by the apposition of two hemichannels. Forms heteromeric channels with GJB2. Detected in cochlea (at protein level). Detected in cochlea. Expressed in skin.

Its subcellular location is the cell membrane. The protein resides in the cell junction. It is found in the gap junction. Functionally, structural component of gap junctions. Gap junctions are dodecameric channels that connect the cytoplasm of adjoining cells. They are formed by the docking of two hexameric hemichannels, one from each cell membrane. Small molecules and ions diffuse from one cell to a neighboring cell via the central pore. The chain is Gap junction beta-4 protein (Gjb4) from Mus musculus (Mouse).